The primary structure comprises 506 residues: Ribose import ATP-binding protein RbsA (506 aa).

2 ABC transporter domains span residues 5–237 (VQLI…VGRP) and 249–492 (PFGA…LAIE). 37 to 44 (GENGAGKS) contributes to the ATP binding site.

Belongs to the ABC transporter superfamily. Ribose importer (TC 3.A.1.2.1) family. As to quaternary structure, the complex is composed of an ATP-binding protein (RbsA), two transmembrane proteins (RbsC) and a solute-binding protein (RbsB).

The protein resides in the cell inner membrane. It carries out the reaction D-ribose(out) + ATP + H2O = D-ribose(in) + ADP + phosphate + H(+). In terms of biological role, part of the ABC transporter complex RbsABC involved in ribose import. Responsible for energy coupling to the transport system. The polypeptide is Ribose import ATP-binding protein RbsA (Chelativorans sp. (strain BNC1)).